The primary structure comprises 99 residues: A-type ATP synthase subunit F (99 aa).

It belongs to the V-ATPase F subunit family. In terms of assembly, has multiple subunits with at least A(3), B(3), C, D, E, F, H, I and proteolipid K(x).

The protein localises to the cell membrane. Functionally, component of the A-type ATP synthase that produces ATP from ADP in the presence of a proton gradient across the membrane. This chain is A-type ATP synthase subunit F, found in Methanococcus maripaludis (strain C6 / ATCC BAA-1332).